The chain runs to 414 residues: Glutamyl-tRNA reductase (414 aa).

Substrate-binding positions include 49 to 52, S108, 113 to 115, and Q119; these read TCNR and EPQ. C50 acts as the Nucleophile in catalysis. An NADP(+)-binding site is contributed by 188-193; the sequence is GAGQTG.

The protein belongs to the glutamyl-tRNA reductase family. As to quaternary structure, homodimer.

It catalyses the reaction (S)-4-amino-5-oxopentanoate + tRNA(Glu) + NADP(+) = L-glutamyl-tRNA(Glu) + NADPH + H(+). It participates in porphyrin-containing compound metabolism; protoporphyrin-IX biosynthesis; 5-aminolevulinate from L-glutamyl-tRNA(Glu): step 1/2. In terms of biological role, catalyzes the NADPH-dependent reduction of glutamyl-tRNA(Glu) to glutamate 1-semialdehyde (GSA). In Francisella tularensis subsp. novicida (strain U112), this protein is Glutamyl-tRNA reductase.